The sequence spans 564 residues: Urocanate hydratase (564 aa).

NAD(+) is bound by residues 54-55, Gln-132, 178-180, Glu-198, Arg-203, 244-245, 269-273, 279-280, and Tyr-328; these read GG, GMG, NA, QTSAH, and YL. Residue Cys-416 is part of the active site. NAD(+) is bound at residue Gly-498.

It belongs to the urocanase family. In terms of assembly, homodimer. NAD(+) serves as cofactor.

It catalyses the reaction 4-imidazolone-5-propanoate = trans-urocanate + H2O. It functions in the pathway amino-acid degradation; L-histidine degradation into L-glutamate; N-formimidoyl-L-glutamate from L-histidine: step 2/3. In Trifolium repens (Creeping white clover), this protein is Urocanate hydratase.